Consider the following 367-residue polypeptide: Nociceptin receptor (367 aa).

Residues 1-45 (MESLFPAPFWEVLYGSHFQGNLSLLNETVPHHLLLNASHSAFLPL) lie on the Extracellular side of the membrane. N-linked (GlcNAc...) asparagine glycans are attached at residues N21, N26, and N36. The chain crosses the membrane as a helical span at residues 46–71 (GLKVTIVGLYLAVCIGGLLGNCLVMY). Residues 72–84 (VILRHTKMKTATN) lie on the Cytoplasmic side of the membrane. A helical membrane pass occupies residues 85–106 (IYIFNLALADTLVLLTLPFQGT). Over 107 to 121 (DILLGFWPFGNALCK) the chain is Extracellular. A disulfide bridge links C120 with C197. Residues 122 to 143 (TVIAIDYYNMFTSTFTLTAMSV) form a helical membrane-spanning segment. Residues 144-162 (DRYVAICHPIRALDVRTSS) are Cytoplasmic-facing. A helical transmembrane segment spans residues 163–185 (KAQAVNVAIWALASVVGVPVAIM). The Extracellular portion of the chain corresponds to 186–208 (GSAQVEDEEIECLVEIPAPQDYW). A helical transmembrane segment spans residues 209–233 (GPVFAICIFLFSFIIPVLIISVCYS). Over 234-261 (LMIRRLRGVRLLSGSREKDRNLRRITRL) the chain is Cytoplasmic. The chain crosses the membrane as a helical span at residues 262–282 (VLVVVAVFVGCWTPVQVFVLV). At 283-297 (QGLGVQPGSETAVAI) the chain is on the extracellular side. Residues 298–319 (LRFCTALGYVNSCLNPILYAFL) traverse the membrane as a helical segment. The Cytoplasmic portion of the chain corresponds to 320–367 (DENFKACFRKFCCASALHREMQVSDRVRSIAKDVGLGCKTSETVPRPA). A lipid anchor (S-palmitoyl cysteine) is attached at C331.

This sequence belongs to the G-protein coupled receptor 1 family. In terms of processing, phosphorylation at Ser-360 requires GRK3. In terms of tissue distribution, in the brain, isoform KOR3 and isoform KOR3C are most abundant in hypothalamus and periaqueductal gray. Isoform KOR3A is highly expressed in cortex, striatum and brainstem. Isoform KOR3D is highly expressed in cerebellum, hypothalamus and brainstem. Detected in spleen lymphocytes.

The protein resides in the cell membrane. It localises to the cytoplasmic vesicle. Functionally, G-protein coupled opioid receptor that functions as a receptor for the endogenous neuropeptide nociceptin. Ligand binding causes a conformation change that triggers signaling via guanine nucleotide-binding proteins (G proteins) and modulates the activity of down-stream effectors. Signaling via G proteins mediates inhibition of adenylate cyclase activity and calcium channel activity. Arrestins modulate signaling via G proteins and mediate the activation of alternative signaling pathways that lead to the activation of MAP kinases. Plays a role in modulating nociception and the perception of pain. Plays a role in the regulation of locomotor activity by the neuropeptide nociceptin. This Mus musculus (Mouse) protein is Nociceptin receptor (Oprl1).